The primary structure comprises 451 residues: Ribulose bisphosphate carboxylase large chain (451 aa).

The residue at position 5 (K5) is an N6,N6,N6-trimethyllysine. N114 and T164 together coordinate substrate. The Proton acceptor role is filled by K166. K168 contacts substrate. K192, D194, and E195 together coordinate Mg(2+). K192 is modified (N6-carboxylysine). The active-site Proton acceptor is H285. Positions 286, 318, and 370 each coordinate substrate.

It belongs to the RuBisCO large chain family. Type I subfamily. As to quaternary structure, heterohexadecamer of 8 large chains and 8 small chains; disulfide-linked. The disulfide link is formed within the large subunit homodimers. It depends on Mg(2+) as a cofactor. Post-translationally, the disulfide bond which can form in the large chain dimeric partners within the hexadecamer appears to be associated with oxidative stress and protein turnover.

It is found in the plastid. Its subcellular location is the chloroplast. The enzyme catalyses 2 (2R)-3-phosphoglycerate + 2 H(+) = D-ribulose 1,5-bisphosphate + CO2 + H2O. It catalyses the reaction D-ribulose 1,5-bisphosphate + O2 = 2-phosphoglycolate + (2R)-3-phosphoglycerate + 2 H(+). RuBisCO catalyzes two reactions: the carboxylation of D-ribulose 1,5-bisphosphate, the primary event in carbon dioxide fixation, as well as the oxidative fragmentation of the pentose substrate in the photorespiration process. Both reactions occur simultaneously and in competition at the same active site. This chain is Ribulose bisphosphate carboxylase large chain, found in Aristea glauca.